The sequence spans 167 residues: L-alanine exporter AlaE (167 aa).

Transmembrane regions (helical) follow at residues 25-45 (GTEF…TGII), 50-70 (IAGM…ALMI), 105-125 (FQVP…GGLV), and 129-149 (LGAA…LNWV).

This sequence belongs to the AlaE exporter family.

The protein resides in the cell inner membrane. Its function is as follows. Exports L-alanine. This Pantoea sp. (strain At-9b) protein is L-alanine exporter AlaE.